The following is a 242-amino-acid chain: Triosephosphate isomerase (242 aa).

8–10 (NWK) provides a ligand contact to substrate. His98 serves as the catalytic Electrophile. The active-site Proton acceptor is the Glu167. Substrate contacts are provided by residues Gly173, Ser205, and 226–227 (GG).

It belongs to the triosephosphate isomerase family. Homodimer.

The protein localises to the cytoplasm. It carries out the reaction D-glyceraldehyde 3-phosphate = dihydroxyacetone phosphate. It functions in the pathway carbohydrate biosynthesis; gluconeogenesis. It participates in carbohydrate degradation; glycolysis; D-glyceraldehyde 3-phosphate from glycerone phosphate: step 1/1. Functionally, involved in the gluconeogenesis. Catalyzes stereospecifically the conversion of dihydroxyacetone phosphate (DHAP) to D-glyceraldehyde-3-phosphate (G3P). This Mesomycoplasma hyopneumoniae (strain 7448) (Mycoplasma hyopneumoniae) protein is Triosephosphate isomerase.